Reading from the N-terminus, the 615-residue chain is Proteasome-associated ATPase (615 aa).

The span at 1 to 13 (MSESQRHEAREDG) shows a compositional bias: basic and acidic residues. Residues 1–32 (MSESQRHEAREDGFTTPHESGLSSEDAAELEE) form a disordered region. A coiled-coil region spans residues 22 to 100 (LSSEDAAELE…LREEVDRLGQ (79 aa)). 302–307 (GCGKTL) contributes to the ATP binding site. Residues 614 to 615 (YL) form a docks into pockets in the proteasome alpha-ring region.

It belongs to the AAA ATPase family. Homohexamer. Assembles into a hexameric ring structure that caps the 20S proteasome core. Strongly interacts with the prokaryotic ubiquitin-like protein Pup through a hydrophobic interface; the interacting region of ARC lies in its N-terminal coiled-coil domain. There is one Pup binding site per ARC hexamer ring. Upon ATP-binding, the C-terminus of ARC interacts with the alpha-rings of the proteasome core, possibly by binding to the intersubunit pockets.

It functions in the pathway protein degradation; proteasomal Pup-dependent pathway. Its function is as follows. ATPase which is responsible for recognizing, binding, unfolding and translocation of pupylated proteins into the bacterial 20S proteasome core particle. May be essential for opening the gate of the 20S proteasome via an interaction with its C-terminus, thereby allowing substrate entry and access to the site of proteolysis. Thus, the C-termini of the proteasomal ATPase may function like a 'key in a lock' to induce gate opening and therefore regulate proteolysis. In Mycobacterium sp. (strain JLS), this protein is Proteasome-associated ATPase.